We begin with the raw amino-acid sequence, 283 residues long: Acyl-coenzyme A diphosphatase FITM2 (283 aa).

Residues 1–11 (MSTRRSSTRAD) are compositionally biased toward low complexity. The tract at residues 1 to 21 (MSTRRSSTRADSTTKRPASPN) is disordered. Over 1–39 (MSTRRSSTRADSTTKRPASPNSTPNAALGIFVAIARQIL) the chain is Cytoplasmic. The helical transmembrane segment at 40-60 (FIDARKVALFYLAFVTVLSFI) threads the bilayer. Topologically, residues 61-81 (ESRIELDSTYYLVQKHSVLNQ) are lumenal. Residues 82–102 (YGVKMGWFWTLVIVGPFIWFS) form a helical membrane-spanning segment. Over 103-120 (SKAHNRRDRDQPIVDVCR) the chain is Cytoplasmic. Residues 121 to 141 (LGVGTACWYFSVQFFHKVLAL) traverse the membrane as a helical segment. The Lumenal portion of the chain corresponds to 142-168 (TSMCDKGRTLTRAQCSEKEGVWTPGYD). Residues 169–189 (ISGHCFLMIYSILIITEEAIA) form a helical membrane-spanning segment. His-172 is an active-site residue. Topologically, residues 190 to 219 (YRHYQQVTDAVHQMDGDREEHDRLTRCIQY) are cytoplasmic. A run of 2 helical transmembrane segments spans residues 220–240 (FFVA…ISVL) and 241–261 (YYHI…CWFV). His-243 is a catalytic residue. Residues 262–283 (TYRMLYPAGFLASPIRRTVGRK) are Cytoplasmic-facing.

The protein belongs to the FIT family. FIT2 subfamily.

The protein localises to the endoplasmic reticulum membrane. It catalyses the reaction an acyl-CoA + H2O = an acyl-4'-phosphopantetheine + adenosine 3',5'-bisphosphate + 2 H(+). In terms of biological role, fatty acyl-coenzyme A (CoA) diphosphatase that hydrolyzes fatty acyl-CoA to yield acyl-4'-phosphopantetheine and adenosine 3',5'-bisphosphate. Preferentially hydrolyzes unsaturated long-chain acyl-CoA substrates in the endoplasmic reticulum (ER) lumen. This catalytic activity is required for maintaining ER structure and for lipid droplets (LDs) biogenesis, which are lipid storage organelles involved in maintaining lipid and energy homeostasis. May directly bind to diacylglycerol (DAGs) and triacylglycerol, which is also important for LD biogenesis. May support directional budding of nacent LDs from the ER into the cytosol by reducing DAG levels at sites of LD formation. May play a role in the regulation of cell morphology, ER morphology and cytoskeletal organization. This is Acyl-coenzyme A diphosphatase FITM2 from Caenorhabditis elegans.